Here is a 190-residue protein sequence, read N- to C-terminus: Lipid A acyltransferase PagP (190 aa).

The first 18 residues, 1-18 (MKRLISCLTIICALNASA), serve as a signal peptide directing secretion. Active-site residues include His-60, Asp-103, and Ser-104.

Belongs to the lipid A palmitoyltransferase family. Homodimer.

It localises to the cell outer membrane. It catalyses the reaction a lipid A + a 1,2-diacyl-sn-glycero-3-phosphocholine = a hepta-acyl lipid A + a 2-acyl-sn-glycero-3-phosphocholine. It carries out the reaction a lipid IVA + a 1,2-diacyl-sn-glycero-3-phosphocholine = a lipid IVB + a 2-acyl-sn-glycero-3-phosphocholine. The catalysed reaction is a lipid IIA + a 1,2-diacyl-sn-glycero-3-phosphocholine = a lipid IIB + a 2-acyl-sn-glycero-3-phosphocholine. Its function is as follows. Transfers a fatty acid residue from the sn-1 position of a phospholipid to the N-linked hydroxyfatty acid chain on the proximal unit of lipid A or its precursors. This Legionella pneumophila (strain Paris) protein is Lipid A acyltransferase PagP.